The primary structure comprises 509 residues: ATP synthase subunit alpha (509 aa).

ATP is bound at residue glycine 169–threonine 176.

The protein belongs to the ATPase alpha/beta chains family. As to quaternary structure, F-type ATPases have 2 components, CF(1) - the catalytic core - and CF(0) - the membrane proton channel. CF(1) has five subunits: alpha(3), beta(3), gamma(1), delta(1), epsilon(1). CF(0) has three main subunits: a(1), b(2) and c(9-12). The alpha and beta chains form an alternating ring which encloses part of the gamma chain. CF(1) is attached to CF(0) by a central stalk formed by the gamma and epsilon chains, while a peripheral stalk is formed by the delta and b chains.

Its subcellular location is the cell inner membrane. It carries out the reaction ATP + H2O + 4 H(+)(in) = ADP + phosphate + 5 H(+)(out). Produces ATP from ADP in the presence of a proton gradient across the membrane. The alpha chain is a regulatory subunit. The protein is ATP synthase subunit alpha of Novosphingobium aromaticivorans (strain ATCC 700278 / DSM 12444 / CCUG 56034 / CIP 105152 / NBRC 16084 / F199).